The chain runs to 396 residues: Fumarate--(S)-2,3-diaminopropanoate ligase (396 aa).

The enzyme catalyses (S)-2,3-diaminopropanoate + fumarate + ATP = N(3)-fumaroyl-(S)-2,3-diaminopropanoate + AMP + diphosphate. It functions in the pathway antibiotic biosynthesis. Functionally, involved in dapdiamide antibiotics biosynthesis. Ligates fumarate and 2,3-diaminopropionate (DAP) to form N-beta-fumaroyl-DAP. Can also form N-succinoyl-DAP from succinate and DAP, with lower efficiency. In Enterobacter agglomerans (Erwinia herbicola), this protein is Fumarate--(S)-2,3-diaminopropanoate ligase.